A 313-amino-acid chain; its full sequence is Aspartate carbamoyltransferase catalytic subunit (313 aa).

2 residues coordinate carbamoyl phosphate: arginine 58 and threonine 59. Lysine 86 is an L-aspartate binding site. Carbamoyl phosphate-binding residues include arginine 108, histidine 136, and glutamine 139. L-aspartate-binding residues include arginine 169 and arginine 223. Glycine 265 and proline 266 together coordinate carbamoyl phosphate.

It belongs to the aspartate/ornithine carbamoyltransferase superfamily. ATCase family. Heterododecamer (2C3:3R2) of six catalytic PyrB chains organized as two trimers (C3), and six regulatory PyrI chains organized as three dimers (R2).

The enzyme catalyses carbamoyl phosphate + L-aspartate = N-carbamoyl-L-aspartate + phosphate + H(+). The protein operates within pyrimidine metabolism; UMP biosynthesis via de novo pathway; (S)-dihydroorotate from bicarbonate: step 2/3. In terms of biological role, catalyzes the condensation of carbamoyl phosphate and aspartate to form carbamoyl aspartate and inorganic phosphate, the committed step in the de novo pyrimidine nucleotide biosynthesis pathway. The polypeptide is Aspartate carbamoyltransferase catalytic subunit (Anaeromyxobacter sp. (strain K)).